A 336-amino-acid chain; its full sequence is DNA repair protein RAD51 homolog B (336 aa).

The HhH domain maps to 45–74 (TVEAVAYAPKKELLNIKGISEAKAEKILAE). 124-131 (GEFRTGKT) serves as a coordination point for ATP. The Nuclear export signal motif lies at 242–257 (LARFLRMLLRLADEFG).

Belongs to the RecA family. RAD51 subfamily. As to quaternary structure, forms linear homooligomers, giving rise to a RAD51 nucleoprotein filament, which is essential for strand-pairing reactions during DNA recombination.

The protein resides in the nucleus. It is found in the cytoplasm. Its subcellular location is the chromosome. In terms of biological role, plays an important role in homologous strand exchange, a key step in DNA repair through homologous recombination (HR). Binds to single-stranded DNA in an ATP-dependent manner to form nucleoprotein filaments which are essential for the homology search and strand exchange. Catalyzes the recognition of homology and strand exchange between homologous DNA partners to form a joint molecule between a processed DNA break and the repair template. Recruited to resolve stalled replication forks during replication stress. Also involved in interstrand cross-link repair. The protein is DNA repair protein RAD51 homolog B (rad51-b) of Xenopus laevis (African clawed frog).